A 98-amino-acid chain; its full sequence is MSSYKYYDLIRRPVITEKTTLLSEQNKYTFYVDKLAEKLAVKKAIEEIFKVKVKKVNILNVKGKKKRFKGVIGRQVDRKKAVVTLEKDHNIDFAGGIK.

This sequence belongs to the universal ribosomal protein uL23 family. As to quaternary structure, part of the 50S ribosomal subunit. Contacts protein L29, and trigger factor when it is bound to the ribosome.

Its function is as follows. One of the early assembly proteins it binds 23S rRNA. One of the proteins that surrounds the polypeptide exit tunnel on the outside of the ribosome. Forms the main docking site for trigger factor binding to the ribosome. The chain is Large ribosomal subunit protein uL23 from Rickettsia bellii (strain OSU 85-389).